A 191-amino-acid polypeptide reads, in one-letter code: Thymidylate kinase (191 aa).

Position 7–14 (7–14 (GIDTAGKS)) interacts with ATP.

The protein belongs to the thymidylate kinase family.

It catalyses the reaction dTMP + ATP = dTDP + ADP. Phosphorylation of dTMP to form dTDP in both de novo and salvage pathways of dTTP synthesis. The sequence is that of Thymidylate kinase from Sulfurimonas denitrificans (strain ATCC 33889 / DSM 1251) (Thiomicrospira denitrificans (strain ATCC 33889 / DSM 1251)).